The following is a 339-amino-acid chain: NADH-quinone oxidoreductase subunit H (339 aa).

Helical transmembrane passes span 19-39, 87-107, 120-140, 153-173, 191-211, 253-273, 275-295, and 310-330; these read LLKI…LTLA, FLLG…VVPF, LLYI…AGWA, SAAQ…GVLM, FWEW…ISAV, ILVA…PVPF, PDSI…FLWF, and LGWK…GAMM.

It belongs to the complex I subunit 1 family. In terms of assembly, NDH-1 is composed of 14 different subunits. Subunits NuoA, H, J, K, L, M, N constitute the membrane sector of the complex.

It is found in the cell inner membrane. It catalyses the reaction a quinone + NADH + 5 H(+)(in) = a quinol + NAD(+) + 4 H(+)(out). Functionally, NDH-1 shuttles electrons from NADH, via FMN and iron-sulfur (Fe-S) centers, to quinones in the respiratory chain. The immediate electron acceptor for the enzyme in this species is believed to be ubiquinone. Couples the redox reaction to proton translocation (for every two electrons transferred, four hydrogen ions are translocated across the cytoplasmic membrane), and thus conserves the redox energy in a proton gradient. This subunit may bind ubiquinone. The sequence is that of NADH-quinone oxidoreductase subunit H from Methylobacillus flagellatus (strain ATCC 51484 / DSM 6875 / VKM B-1610 / KT).